The chain runs to 141 residues: HTH-type transcriptional repressor NsrR (141 aa).

The 128-residue stretch at 2–129 (QLTSFTDYGL…DNYTLADMVQ (128 aa)) folds into the HTH rrf2-type domain. The H-T-H motif DNA-binding region spans 28–51 (ISQVTEVYGVSRNHMVKIINQLSR). The [2Fe-2S] cluster site is built by cysteine 91, cysteine 96, and cysteine 102.

The cofactor is [2Fe-2S] cluster.

In terms of biological role, nitric oxide-sensitive repressor of genes involved in protecting the cell against nitrosative stress. May require iron for activity. In Yersinia enterocolitica serotype O:8 / biotype 1B (strain NCTC 13174 / 8081), this protein is HTH-type transcriptional repressor NsrR.